A 247-amino-acid chain; its full sequence is Probable transcriptional regulatory protein lpg1286 (247 aa).

This sequence belongs to the TACO1 family.

The protein localises to the cytoplasm. This Legionella pneumophila subsp. pneumophila (strain Philadelphia 1 / ATCC 33152 / DSM 7513) protein is Probable transcriptional regulatory protein lpg1286.